Reading from the N-terminus, the 153-residue chain is Transcriptional repressor NrdR (153 aa).

Residues C3–C34 fold into a zinc finger. The region spanning L49–V139 is the ATP-cone domain.

Belongs to the NrdR family. Zn(2+) is required as a cofactor.

In terms of biological role, negatively regulates transcription of bacterial ribonucleotide reductase nrd genes and operons by binding to NrdR-boxes. This Bacillus cytotoxicus (strain DSM 22905 / CIP 110041 / 391-98 / NVH 391-98) protein is Transcriptional repressor NrdR.